The chain runs to 46 residues: NLIQLSNMIKCAIPGSRPLLHYTDYGCYCGKGGSGTPVDELDRCCK.

Positions 28, 30, and 32 each coordinate Ca(2+). Cysteine 29 and cysteine 45 are joined by a disulfide.

It depends on Ca(2+) as a cofactor. Expressed by the venom gland.

It localises to the secreted. It carries out the reaction a 1,2-diacyl-sn-glycero-3-phosphocholine + H2O = a 1-acyl-sn-glycero-3-phosphocholine + a fatty acid + H(+). In terms of biological role, snake venom phospholipase A2 (PLA2) that inhibits collagen-induced platelet aggregation. In terms of inhibition of platelet aggregation, superbin c is more potent as superbin d. PLA2 catalyzes the calcium-dependent hydrolysis of the 2-acyl groups in 3-sn-phosphoglycerides. This Austrelaps superbus (Lowland copperhead snake) protein is Phospholipase A2 superbin c.